A 50-amino-acid polypeptide reads, in one-letter code: uncharacterized protein (50 aa).

This is an uncharacterized protein from Bacillus subtilis (strain 168).